The following is a 760-amino-acid chain: uncharacterized protein (760 aa).

The first 23 residues, 1-23, serve as a signal peptide directing secretion; the sequence is MVIKKGFFALSSCTLGLGLILTA. A lipid anchor (N-palmitoyl cysteine) is attached at cysteine 24. Cysteine 24 is lipidated: S-diacylglycerol cysteine. 2 disordered regions span residues 220–262 and 443–482; these read ANGK…NSDN and YEIK…NQTS. Polar residues-rich tracts occupy residues 222–257 and 448–472; these read GKTT…SQDA and PTNS…GKEQ.

It belongs to the MG185/MG260 family.

It is found in the cell membrane. This is an uncharacterized protein from Mycoplasma pneumoniae (strain ATCC 29342 / M129 / Subtype 1) (Mycoplasmoides pneumoniae).